The primary structure comprises 407 residues: Multidrug resistance protein MdtH (407 aa).

The next 10 helical transmembrane spans lie at 13–33 (CFLI…FPLI), 88–108 (LGFI…SCML), 139–159 (VLML…TWLL), 163–183 (FKLV…FNAW), 210–230 (FVIY…VMLM), 247–267 (WMYI…TWWS), 277–297 (LMVG…VKNL), 298–318 (HTLL…EPAR), 340–360 (LSLA…YDIG), and 368–388 (LPWI…YCQF).

It belongs to the major facilitator superfamily. DHA1 family. MdtH (TC 2.A.1.2.21) subfamily.

The protein resides in the cell inner membrane. The protein is Multidrug resistance protein MdtH of Blochmanniella pennsylvanica (strain BPEN).